We begin with the raw amino-acid sequence, 62 residues long: DNA gyrase inhibitor YacG (62 aa).

Cysteine 9, cysteine 12, cysteine 27, and cysteine 31 together coordinate Zn(2+). A compositionally biased stretch (basic and acidic residues) spans 43–53 (GYRIPGEKAPE). A disordered region spans residues 43–62 (GYRIPGEKAPESGDEEPGDE).

Belongs to the DNA gyrase inhibitor YacG family. As to quaternary structure, interacts with GyrB. Zn(2+) is required as a cofactor.

Functionally, inhibits all the catalytic activities of DNA gyrase by preventing its interaction with DNA. Acts by binding directly to the C-terminal domain of GyrB, which probably disrupts DNA binding by the gyrase. The sequence is that of DNA gyrase inhibitor YacG from Citrifermentans bemidjiense (strain ATCC BAA-1014 / DSM 16622 / JCM 12645 / Bem) (Geobacter bemidjiensis).